Here is a 72-residue protein sequence, read N- to C-terminus: Translation initiation factor IF-1 (72 aa).

An S1-like domain is found at 1–72; sequence MAKEEQIELE…TKGRITFRMK (72 aa).

Belongs to the IF-1 family. In terms of assembly, component of the 30S ribosomal translation pre-initiation complex which assembles on the 30S ribosome in the order IF-2 and IF-3, IF-1 and N-formylmethionyl-tRNA(fMet); mRNA recruitment can occur at any time during PIC assembly.

It is found in the cytoplasm. In terms of biological role, one of the essential components for the initiation of protein synthesis. Stabilizes the binding of IF-2 and IF-3 on the 30S subunit to which N-formylmethionyl-tRNA(fMet) subsequently binds. Helps modulate mRNA selection, yielding the 30S pre-initiation complex (PIC). Upon addition of the 50S ribosomal subunit IF-1, IF-2 and IF-3 are released leaving the mature 70S translation initiation complex. This chain is Translation initiation factor IF-1, found in Alcanivorax borkumensis (strain ATCC 700651 / DSM 11573 / NCIMB 13689 / SK2).